The chain runs to 244 residues: Ubiquinone/menaquinone biosynthesis C-methyltransferase UbiE (244 aa).

Residues T70, D91, and D117 to A118 contribute to the S-adenosyl-L-methionine site.

This sequence belongs to the class I-like SAM-binding methyltransferase superfamily. MenG/UbiE family.

It catalyses the reaction a 2-demethylmenaquinol + S-adenosyl-L-methionine = a menaquinol + S-adenosyl-L-homocysteine + H(+). It carries out the reaction a 2-methoxy-6-(all-trans-polyprenyl)benzene-1,4-diol + S-adenosyl-L-methionine = a 5-methoxy-2-methyl-3-(all-trans-polyprenyl)benzene-1,4-diol + S-adenosyl-L-homocysteine + H(+). Its pathway is quinol/quinone metabolism; menaquinone biosynthesis; menaquinol from 1,4-dihydroxy-2-naphthoate: step 2/2. It participates in cofactor biosynthesis; ubiquinone biosynthesis. In terms of biological role, methyltransferase required for the conversion of demethylmenaquinol (DMKH2) to menaquinol (MKH2) and the conversion of 2-polyprenyl-6-methoxy-1,4-benzoquinol (DDMQH2) to 2-polyprenyl-3-methyl-6-methoxy-1,4-benzoquinol (DMQH2). The chain is Ubiquinone/menaquinone biosynthesis C-methyltransferase UbiE from Nitrosospira multiformis (strain ATCC 25196 / NCIMB 11849 / C 71).